Consider the following 214-residue polypeptide: UPF0502 protein Pput_3252 (214 aa).

The protein belongs to the UPF0502 family.

This chain is UPF0502 protein Pput_3252, found in Pseudomonas putida (strain ATCC 700007 / DSM 6899 / JCM 31910 / BCRC 17059 / LMG 24140 / F1).